A 198-amino-acid chain; its full sequence is Nucleoside triphosphate pyrophosphatase (198 aa).

The active-site Proton acceptor is the D72.

Belongs to the Maf family. It depends on a divalent metal cation as a cofactor.

The protein resides in the cytoplasm. The catalysed reaction is a ribonucleoside 5'-triphosphate + H2O = a ribonucleoside 5'-phosphate + diphosphate + H(+). It catalyses the reaction a 2'-deoxyribonucleoside 5'-triphosphate + H2O = a 2'-deoxyribonucleoside 5'-phosphate + diphosphate + H(+). Nucleoside triphosphate pyrophosphatase. May have a dual role in cell division arrest and in preventing the incorporation of modified nucleotides into cellular nucleic acids. In Corynebacterium diphtheriae (strain ATCC 700971 / NCTC 13129 / Biotype gravis), this protein is Nucleoside triphosphate pyrophosphatase.